The primary structure comprises 833 residues: Translation initiation factor IF-2 (833 aa).

The 171-residue stretch at 331-501 (TRAPVVTVMG…LLIAEMQDLK (171 aa)) folds into the tr-type G domain. The tract at residues 340-347 (GHVDHGKT) is G1. 340 to 347 (GHVDHGKT) is a GTP binding site. The tract at residues 365–369 (GITQH) is G2. A G3 region spans residues 387-390 (DTPG). GTP-binding positions include 387–391 (DTPGH) and 441–444 (NKID). Positions 441–444 (NKID) are G4. Positions 477 to 479 (SAL) are G5.

Belongs to the TRAFAC class translation factor GTPase superfamily. Classic translation factor GTPase family. IF-2 subfamily.

It localises to the cytoplasm. In terms of biological role, one of the essential components for the initiation of protein synthesis. Protects formylmethionyl-tRNA from spontaneous hydrolysis and promotes its binding to the 30S ribosomal subunits. Also involved in the hydrolysis of GTP during the formation of the 70S ribosomal complex. The chain is Translation initiation factor IF-2 from Rickettsia canadensis (strain McKiel).